The following is a 390-amino-acid chain: Probable L-tyrosine/L-aspartate decarboxylase (390 aa).

At Lys239 the chain carries N6-(pyridoxal phosphate)lysine.

Belongs to the group II decarboxylase family. MfnA subfamily. Requires pyridoxal 5'-phosphate as cofactor.

It catalyses the reaction L-tyrosine + H(+) = tyramine + CO2. The catalysed reaction is L-aspartate + H(+) = beta-alanine + CO2. Its pathway is cofactor biosynthesis; methanofuran biosynthesis. The protein operates within cofactor biosynthesis; coenzyme A biosynthesis. Catalyzes the decarboxylation of L-tyrosine to produce tyramine for methanofuran biosynthesis. Can also catalyze the decarboxylation of L-aspartate to produce beta-alanine for coenzyme A (CoA) biosynthesis. The chain is Probable L-tyrosine/L-aspartate decarboxylase from Methanococcus aeolicus (strain ATCC BAA-1280 / DSM 17508 / OCM 812 / Nankai-3).